The primary structure comprises 220 residues: Kinetochore protein Spc25 (220 aa).

Residues histidine 79–glutamate 114 adopt a coiled-coil conformation.

It belongs to the SPC25 family. In terms of assembly, component of the Ndc80 complex, which is composed of Ndc80, Nuf2 and Spc25.

The protein resides in the nucleus. Its subcellular location is the chromosome. It localises to the centromere. The protein localises to the kinetochore. In terms of biological role, acts as a component of the essential kinetochore-associated Ndc80 complex, which is required for chromosome segregation and spindle checkpoint activity during meiosis and mitosis. Required for kinetochore integrity and the organization of stable microtubule binding sites in the outer plate of the kinetochore. Participates in SAC signaling that responds specifically to disruptions in spindle microtubule dynamics. The NDC80 complex synergistically enhances the affinity of the SKA1 complex for microtubules and may allow the NDC80 complex to track depolymerizing microtubules. The protein is Kinetochore protein Spc25 of Drosophila orena (Fruit fly).